The primary structure comprises 490 residues: Betaine aldehyde dehydrogenase (490 aa).

Residue aspartate 93 participates in K(+) binding. Glycine 150–tryptophan 152 contacts NAD(+). Lysine 162 serves as the catalytic Charge relay system. Residue lysine 176 to glutamate 179 participates in NAD(+) binding. K(+) is bound at residue valine 180. Glycine 230–serine 233 is a binding site for NAD(+). Position 246 (leucine 246) interacts with K(+). Catalysis depends on glutamate 252, which acts as the Proton acceptor. Positions 254, 286, and 387 each coordinate NAD(+). The Nucleophile role is filled by cysteine 286. The residue at position 286 (cysteine 286) is a Cysteine sulfenic acid (-SOH). Residues lysine 457 and glycine 460 each contribute to the K(+) site. Residue glutamate 464 is the Charge relay system of the active site.

It belongs to the aldehyde dehydrogenase family. As to quaternary structure, dimer of dimers. Requires K(+) as cofactor.

The enzyme catalyses betaine aldehyde + NAD(+) + H2O = glycine betaine + NADH + 2 H(+). The protein operates within amine and polyamine biosynthesis; betaine biosynthesis via choline pathway; betaine from betaine aldehyde: step 1/1. Its function is as follows. Involved in the biosynthesis of the osmoprotectant glycine betaine. Catalyzes the irreversible oxidation of betaine aldehyde to the corresponding acid. The sequence is that of Betaine aldehyde dehydrogenase from Yersinia pseudotuberculosis serotype O:1b (strain IP 31758).